We begin with the raw amino-acid sequence, 270 residues long: Tubulin-specific chaperone B (270 aa).

The CAP-Gly domain occupies 214–256 (GTVEFSSGVWIGVELDLPLGKNDGSVKGKQYFQCSPKYGCFAK).

It belongs to the TBCB family. In terms of assembly, supercomplex made of cofactors A to E. Cofactors A and D function by capturing and stabilizing tubulin in a quasi-native conformation. Cofactor E binds to the cofactor D-tubulin complex; interaction with cofactor C then causes the release of tubulin polypeptides that are committed to the native state.

The protein resides in the cytoplasm. It is found in the cytoskeleton. Its function is as follows. Binds to alpha-tubulin folding intermediates after their interaction with cytosolic chaperonin in the pathway leading from newly synthesized tubulin to properly folded heterodimer. This chain is Tubulin-specific chaperone B (tbcb), found in Dictyostelium discoideum (Social amoeba).